The sequence spans 126 residues: Ribosome-binding factor A (126 aa).

The protein belongs to the RbfA family. As to quaternary structure, monomer. Binds 30S ribosomal subunits, but not 50S ribosomal subunits or 70S ribosomes.

It is found in the cytoplasm. Its function is as follows. One of several proteins that assist in the late maturation steps of the functional core of the 30S ribosomal subunit. Associates with free 30S ribosomal subunits (but not with 30S subunits that are part of 70S ribosomes or polysomes). Required for efficient processing of 16S rRNA. May interact with the 5'-terminal helix region of 16S rRNA. The protein is Ribosome-binding factor A of Clostridioides difficile (strain 630) (Peptoclostridium difficile).